The chain runs to 314 residues: Olfactory receptor 52K2 (314 aa).

The Extracellular portion of the chain corresponds to 1-27 (MSASNITLTHPTAFLLVGIPGLEHLHI). Asn-5 is a glycosylation site (N-linked (GlcNAc...) asparagine). Residues 28–48 (WISIPFCLAYTLALLGNCTLL) traverse the membrane as a helical segment. The Cytoplasmic segment spans residues 49 to 56 (LIIQADAA). The chain crosses the membrane as a helical span at residues 57 to 77 (LHEPMYLFLAMLAAIDLVLSS). Topologically, residues 78-101 (SALPKMLAIFWFRDREINFFACLA) are extracellular. A disulfide bond links Cys-99 and Cys-191. Residues 102–122 (QMFFLHSFSIMESAVLLAMAF) traverse the membrane as a helical segment. At 123 to 141 (DRYVAICKPLHYTKVLTGS) the chain is on the cytoplasmic side. Residues 142–162 (LITKIGMAAVARAVTLMTPLP) form a helical membrane-spanning segment. Over 163–198 (FLLRCFHYCRGPVIAHCYCEHMAVVRLACGDTSFNN) the chain is Extracellular. Residues 199–219 (IYGIAVAMFIVVLDLLLVILS) traverse the membrane as a helical segment. Residues 220–239 (YIFILQAVLLLASQEARYKA) lie on the Cytoplasmic side of the membrane. Residues 240 to 260 (FGTCVSHIGAILAFYTTVVIS) form a helical membrane-spanning segment. At 261-275 (SVMHRVARHAAPHVH) the chain is on the extracellular side. A helical transmembrane segment spans residues 276–296 (ILLANFYLLFPPMVNPIIYGV). Over 297–314 (KTKQIRESILGVFPRKDM) the chain is Cytoplasmic.

Belongs to the G-protein coupled receptor 1 family.

The protein localises to the cell membrane. Functionally, odorant receptor. The protein is Olfactory receptor 52K2 (OR52K2) of Homo sapiens (Human).